The primary structure comprises 1066 residues: Protein sts5 (1066 aa).

The span at glutamine 18–proline 28 shows a compositional bias: low complexity. Disordered regions lie at residues glutamine 18–threonine 40, alanine 154–serine 178, and serine 247–leucine 286. A compositionally biased stretch (polar residues) spans threonine 29–threonine 40. Threonine 157 is subject to Phosphothreonine. Positions histidine 168–serine 178 are enriched in low complexity. At threonine 262 the chain carries Phosphothreonine. Serine 264 carries the post-translational modification Phosphoserine. Residues serine 270–glycine 280 show a composition bias toward gly residues. At threonine 377 the chain carries Phosphothreonine. Positions serine 454–lysine 480 are disordered. Low complexity predominate over residues serine 464–asparagine 476. Residues valine 482–threonine 556 enclose the CSD2 domain. The RNB domain occupies asparagine 618 to arginine 934. Positions glutamine 983 to serine 1033 constitute a DIS3L2 C-terminal domain.

It belongs to the RNR ribonuclease family. In terms of assembly, interacts with serine/threonine phosphatase ppe1, protein kinase C and an osmosensing MAP kinase.

It is found in the cytoplasm. Functionally, required for the maintenance of cell shape during interphase. Required for localization of cortical actin to the growing tips before mitosis. The chain is Protein sts5 (sts5) from Schizosaccharomyces pombe (strain 972 / ATCC 24843) (Fission yeast).